A 547-amino-acid polypeptide reads, in one-letter code: Chaperonin GroEL (547 aa).

Residues 30–33 (TLGP), Lys-51, 87–91 (DGTTT), Gly-415, and Asp-496 each bind ATP. The interval 528 to 547 (KEGAAPAGGMPDMGGMGGMM) is disordered. The span at 538 to 547 (PDMGGMGGMM) shows a compositional bias: gly residues.

This sequence belongs to the chaperonin (HSP60) family. As to quaternary structure, forms a cylinder of 14 subunits composed of two heptameric rings stacked back-to-back. Interacts with the co-chaperonin GroES.

The protein resides in the cytoplasm. The enzyme catalyses ATP + H2O + a folded polypeptide = ADP + phosphate + an unfolded polypeptide.. Its function is as follows. Together with its co-chaperonin GroES, plays an essential role in assisting protein folding. The GroEL-GroES system forms a nano-cage that allows encapsulation of the non-native substrate proteins and provides a physical environment optimized to promote and accelerate protein folding. The chain is Chaperonin GroEL from Ruegeria sp. (strain TM1040) (Silicibacter sp.).